The sequence spans 432 residues: 3-oxo-tetronate kinase (432 aa).

Residues His155, Ser272, Ala324, Gly344, Glu348, 370–373 (GGET), and Gly414 each bind ATP.

It belongs to the four-carbon acid sugar kinase family.

It carries out the reaction 3-dehydro-L-erythronate + ATP = 3-dehydro-4-O-phospho-L-erythronate + ADP + H(+). It catalyses the reaction 3-dehydro-D-erythronate + ATP = 3-dehydro-4-O-phospho-D-erythronate + ADP + H(+). Its function is as follows. Catalyzes the ATP-dependent phosphorylation of 3-oxo-tetronate to 3-oxo-tetronate 4-phosphate. The sequence is that of 3-oxo-tetronate kinase from Cupriavidus necator (strain ATCC 17699 / DSM 428 / KCTC 22496 / NCIMB 10442 / H16 / Stanier 337) (Ralstonia eutropha).